Here is a 239-residue protein sequence, read N- to C-terminus: Fatty acid metabolism regulator protein (239 aa).

The HTH gntR-type domain maps to 6 to 74 (QSPAGFAEEY…HGKPTKVNNF (69 aa)). The H-T-H motif DNA-binding region spans 34–53 (ERELSELIGVTRTTLREVLQ).

In terms of assembly, homodimer.

Its subcellular location is the cytoplasm. Functionally, multifunctional regulator of fatty acid metabolism. The sequence is that of Fatty acid metabolism regulator protein from Yersinia pseudotuberculosis serotype O:1b (strain IP 31758).